A 403-amino-acid polypeptide reads, in one-letter code: MAKLIVSDLDLKGKKVLVRVDFNVPIKNGVIGDDNRIVAALPTIKYIIDHGGKAILLSHLGRVKSDADKKELSLRPVAERLSELLEKPVTFVPENEGKEVEEAIDNMKDGDVVVLENTRFQDIDNDFGKRESKNDPKLGEYWASLGDVFVNDAFGTAHRSHASNVGIATAMKKAGKPAAAGYLLEKEIKFLGDAVENPVHPFVTILGGAKVSDKIGVIENLIPKSDHILIGGGMAYTFLAAQGHKIGKSLFEADKVELAKSLLEKAGDKIVLPVDNVAATEFSNDAPHEIVGDDIPDNEMGLDIGPKTVEKFRDILKDAKTVVWNGPMGAFEMPNYAEGTLEVGRALADLKDAVTIIGGGDSTAAAKQLGIAPKISHISTGGGASLNYLEGKELPGIACVSDK.

Residues 21 to 23 (DFN), Arg-36, 59 to 62 (HLGR), Arg-119, and Arg-159 contribute to the substrate site. Residues Lys-214, Gly-301, Glu-332, and 359 to 362 (GGDS) contribute to the ATP site.

This sequence belongs to the phosphoglycerate kinase family. As to quaternary structure, monomer.

Its subcellular location is the cytoplasm. The catalysed reaction is (2R)-3-phosphoglycerate + ATP = (2R)-3-phospho-glyceroyl phosphate + ADP. The protein operates within carbohydrate degradation; glycolysis; pyruvate from D-glyceraldehyde 3-phosphate: step 2/5. This is Phosphoglycerate kinase from Lactobacillus johnsonii (strain CNCM I-12250 / La1 / NCC 533).